The following is a 241-amino-acid chain: Major microneme antigen (241 aa).

The N-terminal stretch at 1-34 (MTLPIHFPRCVLYGMASAVWSILFLHILVGDTMS) is a signal peptide. A propeptide spanning residues 35–103 (AADALSWSGG…ATGRGPSFVH (69 aa)) is cleaved from the precursor. The segment covering 64 to 83 (GKELEQQHGGEEQQMQRDTK) has biased composition (basic and acidic residues). A disordered region spans residues 64–90 (GKELEQQHGGEEQQMQRDTKPAAFSNP). 2 PAN domains span residues 112-181 (CFPH…PRSC) and 185-241 (CTDN…VERA). Disulfide bonds link Cys-112-Cys-181, Cys-137-Cys-159, Cys-141-Cys-147, Cys-185-Cys-189, Cys-210-Cys-230, and Cys-214-Cys-220. Ser-121 lines the a carbohydrate pocket. Residues Lys-162, Tyr-169, and Asp-174 each contribute to the a carbohydrate site.

The protein belongs to the microneme antigen family. Homodimer or heterodimer of major microneme antigen and microneme antigen. Contains six disulfide bonds.

The protein resides in the cytoplasmic vesicle. The protein localises to the secretory vesicle. Its subcellular location is the microneme. Galactose-binding lectin. Plays a role in adhesion to the host cell. Has a potential role in invasion of host cells. The chain is Major microneme antigen from Sarcocystis muris.